The following is a 163-amino-acid chain: N5-carboxyaminoimidazole ribonucleotide mutase (163 aa).

Substrate is bound by residues Ser11, Asp14, and Arg41.

It belongs to the AIR carboxylase family. Class I subfamily.

It catalyses the reaction 5-carboxyamino-1-(5-phospho-D-ribosyl)imidazole + H(+) = 5-amino-1-(5-phospho-D-ribosyl)imidazole-4-carboxylate. It functions in the pathway purine metabolism; IMP biosynthesis via de novo pathway; 5-amino-1-(5-phospho-D-ribosyl)imidazole-4-carboxylate from 5-amino-1-(5-phospho-D-ribosyl)imidazole (N5-CAIR route): step 2/2. Its function is as follows. Catalyzes the conversion of N5-carboxyaminoimidazole ribonucleotide (N5-CAIR) to 4-carboxy-5-aminoimidazole ribonucleotide (CAIR). The protein is N5-carboxyaminoimidazole ribonucleotide mutase of Pseudomonas aeruginosa (strain ATCC 15692 / DSM 22644 / CIP 104116 / JCM 14847 / LMG 12228 / 1C / PRS 101 / PAO1).